The sequence spans 60 residues: Short neurotoxin 1 (60 aa).

Intrachain disulfides connect Cys3–Cys22, Cys17–Cys39, Cys41–Cys52, and Cys53–Cys58.

This sequence belongs to the three-finger toxin family. Short-chain subfamily. Type I alpha-neurotoxin sub-subfamily. In terms of tissue distribution, expressed by the venom gland.

The protein localises to the secreted. Functionally, binds to muscle nicotinic acetylcholine receptor (nAChR) and inhibit acetylcholine from binding to the receptor, thereby impairing neuromuscular transmission. This Dendroaspis polylepis polylepis (Black mamba) protein is Short neurotoxin 1.